An 84-amino-acid chain; its full sequence is Large ribosomal subunit protein bL27 (84 aa).

Residues 1–22 (MAHKKAGGSTRNGRDSESKRLG) are disordered.

It belongs to the bacterial ribosomal protein bL27 family.

The protein is Large ribosomal subunit protein bL27 of Shewanella amazonensis (strain ATCC BAA-1098 / SB2B).